The chain runs to 371 residues: uncharacterized protein (371 aa).

The protein to A.pernix APE_1804 and S.solfataricus SSO2105.

This is an uncharacterized protein from Aeropyrum pernix (strain ATCC 700893 / DSM 11879 / JCM 9820 / NBRC 100138 / K1).